The following is a 904-amino-acid chain: Toll-like receptor 3 (904 aa).

The signal sequence occupies residues 1–23 (MRQTLPCIYFWGGLLPFGMLCAS). Positions 24–51 (STTKCTVSHEVADCSHLKLTQVPDDLPT) constitute an LRRNT domain. Over 24–704 (STTKCTVSHE…SCKDSAPFEL (681 aa)) the chain is Lumenal. Cys-28 and Cys-37 are oxidised to a cystine. 3 N-linked (GlcNAc...) asparagine glycosylation sites follow: Asn-52, Asn-57, and Asn-70. 6 LRR repeats span residues 52 to 73 (NITVLNLTHNQLRRLPAANFTR), 76 to 97 (QLTSLDVGFNTISKLEPELCQK), 100 to 121 (MLKVLNLQHNELSQLSDKTFAF), 124 to 145 (NLTELHLMSNSIQKIKNNPFVK), 148 to 168 (NLITLDLSHNGLSSTKLGTQV), and 172 to 193 (NLQELLLSNNKIQALKSEELDI). A disulfide bridge links Cys-95 with Cys-122. Asn-124 carries N-linked (GlcNAc...) asparagine glycosylation. Residue Asn-196 is glycosylated (N-linked (GlcNAc...) asparagine). 2 LRR repeats span residues 198 to 219 (SLKKLELSSNQIKEFSPGCFHA) and 222 to 244 (RLFGLFLNNVQLGPSLTEKLCLE). Asn-247, Asn-252, Asn-265, Asn-275, and Asn-291 each carry an N-linked (GlcNAc...) asparagine glycan. 14 LRR repeats span residues 249 to 270 (SIRNLSLSNSQLSTTSNTTFLG), 275 to 296 (NLTMLDLSYNNLNVVGNDSFAW), 299 to 320 (QLEYFFLEYNNIQHLFSHSLHG), 323 to 344 (NVRYLNLKRSFTKQSISLASLP), 356 to 377 (CLEHLNMEDNDIPGIKSNMFTG), 380 to 400 (NLKYLSLSNSFTSLRTLTNET), 408 to 429 (PLHILNLTKNKISKIESDAFSW), 432 to 454 (HLEVLDLGLNEIGQELTGQEWRG), 465 to 486 (YNKYLQLTRNSFALVPSLQRLM), 507 to 528 (NLTILDLSNNNIANINDDMLEG), 531 to 552 (KLEILDLQHNNLARLWKHANPG), 563 to 584 (HLHILNLESNGFDEIPVEVFKD), 587 to 608 (ELKIIDLGLNNLNTLPASVFNN), and 611 to 632 (SLKSLNLQKNLITSVEKKVFGP). N-linked (GlcNAc...) asparagine glycans are attached at residues Asn-398 and Asn-413. The N-linked (GlcNAc...) asparagine glycan is linked to Asn-507. N-linked (GlcNAc...) asparagine glycans are attached at residues Asn-636 and Asn-662. In terms of domain architecture, LRRCT spans 645 to 698 (NPFDCTCESIAWFVNWINETHTNIPELSSHYLCNTPPHYHGFPVRLFDTSSCKD). Cystine bridges form between Cys-649-Cys-677 and Cys-651-Cys-696. Residues 705–725 (FFMINTSILLIFIFIVLLIHF) form a helical membrane-spanning segment. The Cytoplasmic segment spans residues 726–904 (EGWRISFYWN…VALGSKNSVH (179 aa)). Positions 754-897 (FEYAAYIIHA…AFRHKLQVAL (144 aa)) constitute a TIR domain. Position 759 is a phosphotyrosine (Tyr-759). Glycyl lysine isopeptide (Lys-Gly) (interchain with G-Cter in ubiquitin) cross-links involve residues Lys-765, Lys-812, and Lys-831. Phosphotyrosine is present on Tyr-858.

This sequence belongs to the Toll-like receptor family. As to quaternary structure, monomer and homodimer; dimerization is triggered by ligand-binding, the signaling unit is composed of one ds-RNA of around 40 bp and two TLR3 molecules, and lateral clustering of signaling units along the length of the ds-RNA ligand is required for TLR3 signal transduction. Interacts (via transmembrane domain) with UNC93B1; the interaction is required for transport from the ER to the endosomes. Interacts with SRC; upon binding of double-stranded RNA. Interacts with TICAM1 (via the TIR domain) in response to poly(I:C) and this interaction is enhanced in the presence of WDFY1. The tyrosine-phosphorylated form (via TIR domain) interacts with WDFY1 (via WD repeat 2) in response to poly(I:C). In terms of processing, heavily N-glycosylated, except on that part of the surface of the ectodomain that is involved in ligand binding. Post-translationally, TLR3 signaling requires a proteolytic cleavage mediated by cathepsins CTSB and CTSH, the cleavage occurs between amino acids 252 and 346. The cleaved form of TLR3 is the predominant form found in endosomes. Ubiquitinated by TRIM3; leading to recognition and sorting of polyubiquitinated TLR3 by the ESCRT complexes. Ubiquitinated by ZNRF1 via 'Lys-63'-linked ubiquitin chains; leading to TLR3 lysosomal trafficking and degradation. Ubiquitinated by RNF170 at Lys-765 via 'Lys-48'-linked ubiquitin chains; leading to TLR3 proteasomal degradation. Expressed at high level in placenta and pancreas. Also detected in CD11c+ immature dendritic cells. Only expressed in dendritic cells and not in other leukocytes, including monocyte precursors. TLR3 is the TLR that is expressed most strongly in the brain, especially in astrocytes, glia, and neurons.

The protein resides in the endoplasmic reticulum membrane. It localises to the endosome membrane. Its subcellular location is the early endosome. Functionally, key component of innate and adaptive immunity. TLRs (Toll-like receptors) control host immune response against pathogens through recognition of molecular patterns specific to microorganisms. TLR3 is a nucleotide-sensing TLR which is activated by double-stranded RNA, a sign of viral infection. Acts via the adapter TRIF/TICAM1, leading to NF-kappa-B activation, IRF3 nuclear translocation, cytokine secretion and the inflammatory response. The chain is Toll-like receptor 3 from Homo sapiens (Human).